A 126-amino-acid chain; its full sequence is Arginine decarboxylase proenzyme (126 aa).

Serine 74 serves as the catalytic Schiff-base intermediate with substrate; via pyruvic acid. Residue serine 74 is modified to Pyruvic acid (Ser); by autocatalysis. Residue histidine 79 is the Proton acceptor; for processing activity of the active site. Catalysis depends on cysteine 94, which acts as the Proton donor; for catalytic activity.

It belongs to the prokaryotic AdoMetDC family. Type 1 subfamily. As to quaternary structure, heterooctamer of four alpha and four beta chains arranged as a tetramer of alpha/beta heterodimers. Requires pyruvate as cofactor. Post-translationally, is synthesized initially as an inactive proenzyme. Formation of the active enzyme involves a self-maturation process in which the active site pyruvoyl group is generated from an internal serine residue via an autocatalytic post-translational modification. Two non-identical subunits are generated from the proenzyme in this reaction, and the pyruvate is formed at the N-terminus of the alpha chain, which is derived from the carboxyl end of the proenzyme. The post-translation cleavage follows an unusual pathway, termed non-hydrolytic serinolysis, in which the side chain hydroxyl group of the serine supplies its oxygen atom to form the C-terminus of the beta chain, while the remainder of the serine residue undergoes an oxidative deamination to produce ammonia and the pyruvoyl group blocking the N-terminus of the alpha chain.

The enzyme catalyses L-arginine + H(+) = agmatine + CO2. Its pathway is amine and polyamine biosynthesis; agmatine biosynthesis; agmatine from L-arginine: step 1/1. Its function is as follows. Specifically catalyzes the decarboxylation of L-arginine to agmatine. Has no S-adenosylmethionine decarboxylase (AdoMetDC) activity. The sequence is that of Arginine decarboxylase proenzyme from Pyrobaculum calidifontis (strain DSM 21063 / JCM 11548 / VA1).